We begin with the raw amino-acid sequence, 1061 residues long: Translation initiation factor IF-2 (1061 aa).

Disordered regions lie at residues 51-199 (FARG…VAVK) and 250-460 (AFQA…IPTE). Basic and acidic residues predominate over residues 67 to 77 (NEPKPKIDWSR). Low complexity-rich tracts occupy residues 97–113 (VAAA…KAPV), 120–130 (RPSAPRPAVTA), 167–177 (VPQPRQPSAVV), 184–199 (TPAI…VAVK), and 250–278 (AFQA…AEAP). Positions 279–291 (PVAPEKPAVPAPP) are enriched in pro residues. Over residues 340–360 (SPGGPGGPGGGYGQRPSGPGG) the composition is skewed to gly residues. Residues 381-391 (GFNNGPRPGFG) are compositionally biased toward low complexity. Over residues 392-405 (QRPGGFGQRPGMGA) the composition is skewed to gly residues. One can recognise a tr-type G domain in the interval 552–728 (SRPPVVTVMG…CLVADLGNLK (177 aa)). Positions 561 to 568 (GHVDHGKT) are G1. A GTP-binding site is contributed by 561–568 (GHVDHGKT). Positions 586-590 (GITQH) are G2. The G3 stretch occupies residues 614 to 617 (DTPG). Residues 614–618 (DTPGH) and 668–671 (NKID) each bind GTP. The segment at 668-671 (NKID) is G4. Positions 704–706 (SAK) are G5.

Belongs to the TRAFAC class translation factor GTPase superfamily. Classic translation factor GTPase family. IF-2 subfamily.

It localises to the cytoplasm. Its function is as follows. One of the essential components for the initiation of protein synthesis. Protects formylmethionyl-tRNA from spontaneous hydrolysis and promotes its binding to the 30S ribosomal subunits. Also involved in the hydrolysis of GTP during the formation of the 70S ribosomal complex. The sequence is that of Translation initiation factor IF-2 from Acidobacterium capsulatum (strain ATCC 51196 / DSM 11244 / BCRC 80197 / JCM 7670 / NBRC 15755 / NCIMB 13165 / 161).